The sequence spans 294 residues: MNRSDGLVRRSVKPRENGGAEGGLNANTPDDNQDALDNLKDQEDNIDDGDSKETRLTLMEEVLLLGLKDKEGYTSFWNDCISSGLRGCILIELGLRGRVMIEKSGMRRRGLCTRKLILKSDQQTGDVLLDEALKHIKETDPPETVQSWIEYLSGETWNPLKLRYQLKNVRERLAKNLVEKGVLTTEKQNFLLFDMTTHPLSDNVVKCRLVKKIQDSVLSKWVNDPQRMDKRMLALIFLAHASDVIENAFAPLNDDDYEVAMKRVRELLDLDFEAESAKPNANEILWAVFMAFTK.

Positions 1–52 (MNRSDGLVRRSVKPRENGGAEGGLNANTPDDNQDALDNLKDQEDNIDDGDSK) are disordered. Over residues 37–52 (DNLKDQEDNIDDGDSK) the composition is skewed to basic and acidic residues. The a 1,2-diacyl-sn-glycero-3-phospho-(1D-myo-inositol 4-phosphate) site is built by Trp-77, Arg-86, Lys-167, and Arg-170. Residues 186-197 (EKQNFLLFDMTT) form a beta-hairpin required for oligomerization region.

This sequence belongs to the GOLPH3/VPS74 family. As to quaternary structure, homooligomer. Interacts with botv, Ext2 and ttv. Interacts with Vti1. Interacts with Vps35, Rab5, Chc, Rab11, zip, Pav and Septin1.

The protein localises to the golgi apparatus membrane. It is found in the cytoplasmic vesicle. Its subcellular location is the cleavage furrow. Its function is as follows. Phosphatidylinositol-4-phosphate-binding protein that links Golgi membranes to the cytoskeleton and may participate in the tensile force required for vesicle budding from the Golgi. Thereby, may play a role in Golgi membrane trafficking and could indirectly give its flattened shape to the Golgi apparatus. May also bind to the coatomer to regulate Golgi membrane trafficking. May play a role in anterograde transport from the Golgi to the plasma membrane and regulate secretion. Also involved in the control of the localization of Golgi enzymes through interaction with their cytoplasmic part. Functions in cytokinesis by regulating contractile ring formation and vesicle trafficking during cleavage furrow ingression. May also have a role in the intital steps of central spindle formation. Can also bind phosphatidylinositol-3-phosphate and phosphatidylinositol-5-phosphate in vitro. In Drosophila melanogaster (Fruit fly), this protein is Golgi phosphoprotein 3 homolog sauron.